A 35-amino-acid chain; its full sequence is Beta-amanitin proprotein (35 aa).

Positions 1-10 (MSDINATRLP) are excised as a propeptide. The segment at residues 11-18 (IWGIGCDP) is a cross-link (cyclopeptide (Ile-Pro)). A cross-link (2'-cysteinyl-6'-hydroxytryptophan sulfoxide (Trp-Cys)) is located at residues 12–16 (WGIGC). Positions 19 to 35 (CVGDDVTALLTRGEALC) are excised as a propeptide.

It belongs to the MSDIN fungal toxin family. Post-translationally, processed by the macrocyclase-peptidase enzyme POPB to yield a toxic cyclic octapeptide. POPB first removes 10 residues from the N-terminus. Conformational trapping of the remaining peptide forces the enzyme to release this intermediate rather than proceed to macrocyclization. The enzyme rebinds the remaining peptide in a different conformation and catalyzes macrocyclization of the N-terminal 8 residues. As to expression, expressed in basidiocarps.

Toxin belonging to the bicyclic octapeptides amatoxins that acts by binding non-competitively to RNA polymerase II and greatly slowing the elongation of transcripts from target promoters. In Amanita exitialis (Guangzhou destroying angel), this protein is Beta-amanitin proprotein.